A 616-amino-acid polypeptide reads, in one-letter code: Chaperone protein HscA homolog (616 aa).

This sequence belongs to the heat shock protein 70 family.

Functionally, chaperone involved in the maturation of iron-sulfur cluster-containing proteins. Has a low intrinsic ATPase activity which is markedly stimulated by HscB. This chain is Chaperone protein HscA homolog, found in Vibrio cholerae serotype O1 (strain M66-2).